The primary structure comprises 217 residues: Ribosomal RNA small subunit methyltransferase G (217 aa).

S-adenosyl-L-methionine-binding positions include glycine 79, phenylalanine 84, 130 to 131 (AE), and arginine 148.

The protein belongs to the methyltransferase superfamily. RNA methyltransferase RsmG family.

It is found in the cytoplasm. The enzyme catalyses guanosine(527) in 16S rRNA + S-adenosyl-L-methionine = N(7)-methylguanosine(527) in 16S rRNA + S-adenosyl-L-homocysteine. In terms of biological role, specifically methylates the N7 position of guanine in position 527 of 16S rRNA. This chain is Ribosomal RNA small subunit methyltransferase G, found in Myxococcus xanthus (strain DK1622).